A 740-amino-acid chain; its full sequence is Elongation factor 2 (740 aa).

One can recognise a tr-type G domain in the interval 23-264 (AQIRNAGTLA…MIIEHIPPPN (242 aa)). GTP is bound by residues 32 to 39 (AHVDHGKT), 98 to 102 (DTPGH), and 152 to 155 (NKID). At H605 the chain carries Diphthamide.

Belongs to the TRAFAC class translation factor GTPase superfamily. Classic translation factor GTPase family. EF-G/EF-2 subfamily.

It localises to the cytoplasm. Catalyzes the GTP-dependent ribosomal translocation step during translation elongation. During this step, the ribosome changes from the pre-translocational (PRE) to the post-translocational (POST) state as the newly formed A-site-bound peptidyl-tRNA and P-site-bound deacylated tRNA move to the P and E sites, respectively. Catalyzes the coordinated movement of the two tRNA molecules, the mRNA and conformational changes in the ribosome. The protein is Elongation factor 2 of Pyrobaculum aerophilum (strain ATCC 51768 / DSM 7523 / JCM 9630 / CIP 104966 / NBRC 100827 / IM2).